The chain runs to 2541 residues: MVALSLKISIGNVVKTMQFEPSTMVYDACRMIRERVPEAQMGQPNDFGLFLSDEDPKKGIWLEAGKALDYYMLRNGDTMEYKKKQRPLKIRMLDGTVKTVMVDDSKTVTDMLTTICARIGITNYDEYSLVREIMEEKKEEVTGTLKKDKTLLRDEKKMEKLKQKLHTDDELNWLDHGRTLREQGIDDNETLLLRRKFFYSDQNVDSRDPVQLNLLYVQARDDILNGSHPVSFDKACEFAGYQCQIQFGPHNEQKHKPGFLELKDFLPKEYIKQKGERKIFMAHKNCGNMSEIEAKVRYVKLARSLKTYGVSFFLVKEKMKGKNKLVPRLLGITKECVMRVDEKTKEVIQEWSLTNIKRWAASPKSFTLDFGDYQDGYYSVQTTEGEQIAQLIAGYIDIILKKKKSKDHFGLEGDEESTMLEDSVSPKKSTVLQQQFNRVGKAELGSVALPAIMRTGAGGPENFQVGTMPQAQMQITSGQMHRGHMPPLTSAQQALTGTINSSMQAVNAAQATLDDFETLPPLGQDAASKAWRKNKMDESKHEIHSQADAITAGTASVVNLTAGDPADTDYTAVGCAVTTISSNLTEMSKGVKLLAALMEDEGGNGRQLLQAAKNLASAVSDLLKTAQPASAEPRQNLLQAAGLVGQTSGELLQQIGESDTDPRFQDMLMQLAKAVASAAAALVLKAKNVAQKTEDSALQTQVIAAATQCALSTSQLVACTKVVAPTISSPVCQEQLIEAGKLVAKSAEGCVEASKAATNDDQLLKQVGVAATAVTQALNDLLQHIKQHATGGQPIGRYDQATDTILNVTENIFSSMGDAGEMVRQARILAQATSDLVNAIKADAEGETDLENSRKLLSAAKILADATAKMVEAAKGAAAHPDSEEQQQRLREAAEGLRMATNAAAQNAIKKKLVHKLEHAAKQAAASATQTIAAAQHAAASNKNPAAQQQLVQSCKVVADQIPMLVQGVRGSQSQPDSPSAQLALIAASQNFLQPGGKMVAAAKATVPTITDQASAMQLSQCAKNLAAALAELRTAAQKAQEACGPLEIDSALGLVQSLERDLKEAKAAARDGKLKPLPGETMEKCAQDLGNSTKAVTSAIAHLLGEVAQGNENYTGIAAREVAQALRSLSQAARGVAANSSDPQAQNAMLECASDVMDKANNLIEEARKAVAKPGDPDSQQRLVQVAKAVSQALNRCVNCLPGQRDVDAAIRMVGEASKRLLSDSFPPSNKTFQEAQSQLNRAAAGLNQSANELVQASRGTPQDLAKSSGKFGQDFNEFLQAGVEMASLSPTKEDQAQVVSNLKSISMSSSKLLLAAKALSADPTSPNLKSQLAAAARAVTDSINQLITMCTQQAPGQKECDNALRELETVKELLENPTQTVNDMSYFSCLDSVMENSKVLGESMAGISQNAKNSKLPEFGESISAASKALCGLTEAAAQAAYLVGVSDPNSQAGQQGLVDPTQFARANQAIQMACQNLVDPACTQSQVLSAATIVAKHTSALCNTCRLASSRTANPVAKRQFVQPAKEVANSTANLVKTIKALDGAFNEENRERCRAATAPLIEAVDNLTAFASNPEFATVPAQISPEGRRAMEPIVTSAKTMLESSAGLIQTARSLAVNPKDPPQWSVLAGHSRTVSDSIKKLITNMRDKAPGQRECDEAIDVLNRCMREVDQASLAAISQQLAPREGISQEALHNQMITAVQEINNLIEPVASAARAEASQLGHKVSQMAQYFEPLILAAIGAASKTPNHQQQMNLLDQTKTLAESALQMLYTAKEAGGNPKQAAHTQEALEEAVQMMKEAVEDLTTTLNEAASAAGVVGGMVDSITQAINQLDEGPMGEPEGTFVDYQTTMVKTAKAIAVTVQEMVTKSTTNPDELGILANQLTNDYGQLAQQAKPAALTAENEEIGSHIKRRVQELGHGCAALVTKAGALQCSPSDAYTKKELIESARKVSEKVSHVLAALQAGNRGTQACITAASAVSGIIADLDTTIMFATAGTLNRENSETFADHREGILKTAKALVEDTKVLVQNATASQEKLAQAAQSSVSTITRLAEVVKLGAASLGSEDPETQVVLINAVKDVAKALGDLIGATKAAAGKAGDDPAVYQLKNSAKVMVTNVTSLLKTVKAVEDEATKGTRALEATIEHIRQELAVFSSPVPPAQVSTPEDFIRMTKGITMATAKAVAAGNSCRQEDVIATANLSRRAIADMLRACKEAAYHPEVSADVRQRALRFGKECADGYLELLEHVLVILQKPTHELKQQLAGYSKRVASSVTELIQAAEAMKGTEWVDPEDPTVIAENELLGAAAAIEAAAKKLEQLKPRAKPKQADESLDFEEQILEAAKSIAAATSALVKAASAAQRELVAQGKVGVIPANAVDDGQWSQGLISAARMVAAATNNLCEAANAAVQGHASEEKLISSAKQVAASTAQLLVACKVKADHDSEAMKRLQAAGNAVKRASDNLVKAAQKAAAFQDHDETVVVKEKMVGGIAQIIAAQEEMLRKERELEEARKKLAMIRQQQYKFLPTELRDEEQN.

The 318-residue stretch at 86–403 folds into the FERM domain; it reads RPLKIRMLDG…GYIDIILKKK (318 aa). An interaction with LAYN region spans residues 280–435; that stretch reads FMAHKNCGNM…PKKSTVLQQQ (156 aa). The helical bundle R1 stretch occupies residues 482-655; that stretch reads RGHMPPLTSA…QTSGELLQQI (174 aa). Residues 656 to 786 are helical bundle R2; sequence GESDTDPRFQ…ALNDLLQHIK (131 aa). The interval 787 to 911 is helical bundle R3; that stretch reads QHATGGQPIG…NAAAQNAIKK (125 aa). The tract at residues 913–1043 is helical bundle R4; that stretch reads LVHKLEHAAK…RTAAQKAQEA (131 aa). The interval 1045–1205 is helical bundle R5; it reads GPLEIDSALG…NRCVNCLPGQ (161 aa). A helical bundle R6 region spans residues 1206 to 1356; it reads RDVDAAIRMV…QLITMCTQQA (151 aa). Residues 1357–1452 are helical bundle R7A; it reads PGQKECDNAL…AYLVGVSDPN (96 aa). The tract at residues 1358 to 1658 is interaction with VCL and F-actin; it reads GQKECDNALR…NMRDKAPGQR (301 aa). A helical bundle R8 region spans residues 1460 to 1579; it reads LVDPTQFARA…NLTAFASNPE (120 aa). O-linked (GlcNAc) threonine glycosylation is present at Thr-1486. The segment at 1580–1652 is helical bundle R7B; that stretch reads FATVPAQISP…IKKLITNMRD (73 aa). A helical bundle R9 region spans residues 1654-1821; sequence APGQRECDEA…TLNEAASAAG (168 aa). Residues 1822–1972 form a helical bundle R10 region; the sequence is VVGGMVDSIT…VLAALQAGNR (151 aa). Thr-1889 carries O-linked (GlcNAc) threonine glycosylation. The tract at residues 1973–2139 is helical bundle R11; the sequence is GTQACITAAS…TVKAVEDEAT (167 aa). The segment at 2140–2293 is helical bundle R12; sequence KGTRALEATI…QAAEAMKGTE (154 aa). In terms of domain architecture, I/LWEQ spans 2292-2531; that stretch reads TEWVDPEDPT…MIRQQQYKFL (240 aa). The segment at 2299-2481 is helical bundle R13; sequence DPTVIAENEL…AAQKAAAFQD (183 aa).

Interacts with PIP5K1C and NRAP. Binds with high affinity to vinculin VCL and with low affinity to integrins. Interacts with APBB1IP; this inhibits VCL binding. Interacts with F-actin. Interacts with LAYN. Interacts with THSD1. Post-translationally, phosphorylated.

It localises to the cell projection. Its subcellular location is the ruffle membrane. The protein resides in the cytoplasm. It is found in the cytoskeleton. The protein localises to the cell surface. It localises to the cell junction. Its subcellular location is the focal adhesion. In terms of biological role, high molecular weight cytoskeletal protein concentrated at regions of cell-substratum contact and, in lymphocytes, at cell-cell contacts. Involved in connections of major cytoskeletal structures to the plasma membrane. The chain is Talin-1 (TLN1) from Gallus gallus (Chicken).